Reading from the N-terminus, the 132-residue chain is Small ribosomal subunit protein uS8 (132 aa).

The protein belongs to the universal ribosomal protein uS8 family. Part of the 30S ribosomal subunit. Contacts proteins S5 and S12.

Its function is as follows. One of the primary rRNA binding proteins, it binds directly to 16S rRNA central domain where it helps coordinate assembly of the platform of the 30S subunit. The chain is Small ribosomal subunit protein uS8 from Alkaliphilus oremlandii (strain OhILAs) (Clostridium oremlandii (strain OhILAs)).